We begin with the raw amino-acid sequence, 264 residues long: S-adenosylmethionine decarboxylase proenzyme (264 aa).

Residue S113 is the Schiff-base intermediate with substrate; via pyruvic acid of the active site. The residue at position 113 (S113) is a Pyruvic acid (Ser); by autocatalysis. H118 (proton acceptor; for processing activity) is an active-site residue. C141 acts as the Proton donor; for catalytic activity in catalysis.

Belongs to the prokaryotic AdoMetDC family. Type 2 subfamily. In terms of assembly, heterooctamer of four alpha and four beta chains arranged as a tetramer of alpha/beta heterodimers. Pyruvate is required as a cofactor. In terms of processing, is synthesized initially as an inactive proenzyme. Formation of the active enzyme involves a self-maturation process in which the active site pyruvoyl group is generated from an internal serine residue via an autocatalytic post-translational modification. Two non-identical subunits are generated from the proenzyme in this reaction, and the pyruvate is formed at the N-terminus of the alpha chain, which is derived from the carboxyl end of the proenzyme. The post-translation cleavage follows an unusual pathway, termed non-hydrolytic serinolysis, in which the side chain hydroxyl group of the serine supplies its oxygen atom to form the C-terminus of the beta chain, while the remainder of the serine residue undergoes an oxidative deamination to produce ammonia and the pyruvoyl group blocking the N-terminus of the alpha chain.

The enzyme catalyses S-adenosyl-L-methionine + H(+) = S-adenosyl 3-(methylsulfanyl)propylamine + CO2. It participates in amine and polyamine biosynthesis; S-adenosylmethioninamine biosynthesis; S-adenosylmethioninamine from S-adenosyl-L-methionine: step 1/1. Catalyzes the decarboxylation of S-adenosylmethionine to S-adenosylmethioninamine (dcAdoMet), the propylamine donor required for the synthesis of the polyamines spermine and spermidine from the diamine putrescine. This chain is S-adenosylmethionine decarboxylase proenzyme, found in Xanthomonas oryzae pv. oryzae (strain MAFF 311018).